Consider the following 244-residue polypeptide: Phosphate propanoyltransferase (244 aa).

52–54 (ISA) contributes to the CoA binding site. 2 residues coordinate Zn(2+): His-56 and His-58. A CoA-binding site is contributed by Arg-106. Phosphate is bound at residue Arg-112. Zn(2+)-binding residues include Glu-118, His-166, His-168, and His-214. Position 221 (Asn-221) interacts with CoA.

It belongs to the PduL family. As to quaternary structure, full-length protein forms large oligomers. Possible homotrimer and monomer, when purified in the absence of the encapsulation peptide (EP, residues 1-20). The EP may influence oligomerization. Requires Zn(2+) as cofactor.

The protein localises to the bacterial microcompartment. It carries out the reaction propanoyl-CoA + phosphate = propanoyl phosphate + CoA. Part of a bacterial microcompartment (BMC) locus required for growth on plant and algal sugars, including L-fucose and L-rhamnose. Thought to be active on lactyl-CoA in a lactaldehyde-degradation pathway. CoA is regenerated within the BMC via this enzyme, although there must also be cofactor transport across the BMC. Directly targeted to the BMC. This chain is Phosphate propanoyltransferase, found in Planctopirus limnophila (strain ATCC 43296 / DSM 3776 / IFAM 1008 / Mu 290) (Planctomyces limnophilus).